A 551-amino-acid polypeptide reads, in one-letter code: Trehalose-6-phosphate hydrolase (551 aa).

The active-site Nucleophile is Asp-200. Residue Glu-251 is the Proton donor of the active site.

It belongs to the glycosyl hydrolase 13 family.

The protein localises to the cytoplasm. It carries out the reaction alpha,alpha-trehalose 6-phosphate + H2O = D-glucose 6-phosphate + D-glucose. Its function is as follows. Hydrolyzes trehalose-6-phosphate to glucose and glucose 6-phosphate. Can also very effectively hydrolyze p-nitrophenyl-alpha-D-glucopyranoside, but it does not recognize trehalose, sucrose, maltose, isomaltose, or maltodextrins. The polypeptide is Trehalose-6-phosphate hydrolase (treC) (Escherichia coli (strain K12)).